Reading from the N-terminus, the 206-residue chain is Large ribosomal subunit protein uL4 (206 aa).

The segment at Ala-43 to Ser-78 is disordered. Basic and acidic residues predominate over residues Lys-49–His-58. The segment covering Thr-59–Gly-70 has biased composition (basic residues).

This sequence belongs to the universal ribosomal protein uL4 family. In terms of assembly, part of the 50S ribosomal subunit.

Functionally, one of the primary rRNA binding proteins, this protein initially binds near the 5'-end of the 23S rRNA. It is important during the early stages of 50S assembly. It makes multiple contacts with different domains of the 23S rRNA in the assembled 50S subunit and ribosome. In terms of biological role, forms part of the polypeptide exit tunnel. The sequence is that of Large ribosomal subunit protein uL4 from Cupriavidus metallidurans (strain ATCC 43123 / DSM 2839 / NBRC 102507 / CH34) (Ralstonia metallidurans).